The primary structure comprises 356 residues: Golgi-resident adenosine 3',5'-bisphosphate 3'-phosphatase (356 aa).

At M1 the chain carries N-acetylmethionine. Over 1–12 the chain is Cytoplasmic; it reads MAPMGIRLSPLG. A helical transmembrane segment spans residues 13 to 33; the sequence is VAVFFLLGLGVLYHLYSGFLA. The Lumenal portion of the chain corresponds to 34 to 356; it reads GRFSLFGLGG…KLPDLEKSGH (323 aa). Positions 82–104 are disordered; that stretch reads VRESNVLHEKSKGKTREGAEDKM. D108 acts as the Proton acceptor in catalysis. E131, D172, L174, and D175 together coordinate Mg(2+). T177 functions as the Proton acceptor in the catalytic mechanism. S240 and H243 together coordinate AMP. N-linked (GlcNAc...) asparagine glycosylation is present at N257. Residues G266 and K270 each contribute to the AMP site. D298 contributes to the Mg(2+) binding site.

The protein belongs to the inositol monophosphatase superfamily. Mg(2+) serves as cofactor. Post-translationally, contains N-linked glycan resistant to endoglycosydase H.

The protein resides in the golgi apparatus. It is found in the trans-Golgi network membrane. The catalysed reaction is adenosine 3',5'-bisphosphate + H2O = AMP + phosphate. Its pathway is sulfur metabolism. Its activity is regulated as follows. Strongly inhibited by lithium. Exhibits 3'-nucleotidase activity toward adenosine 3',5'-bisphosphate (PAP), namely hydrolyzes adenosine 3',5'-bisphosphate into adenosine 5'-monophosphate (AMP) and a phosphate. May play a role in the formation of skeletal elements derived through endochondral ossification, possibly by clearing adenosine 3',5'-bisphosphate produced by Golgi sulfotransferases during glycosaminoglycan sulfation. Has no activity toward 3'-phosphoadenosine 5'-phosphosulfate (PAPS) or inositol phosphate (IP) substrates including I(1)P, I(1,4)P2, I(1,3,4)P3, I(1,4,5)P3 and I(1,3,4,5)P4. The sequence is that of Golgi-resident adenosine 3',5'-bisphosphate 3'-phosphatase (Bpnt2) from Rattus norvegicus (Rat).